The following is a 303-amino-acid chain: Vacuolar protein sorting-associated protein 26B (303 aa).

This sequence belongs to the VPS26 family. As to quaternary structure, component of the retromer complex which consists of VPS29 (MAG1), VPS26 (VPS26A or VPS26B), VPS35 (VPS35A or VPS35B or VPS35C), VPS5/17 (SNX1 or SNX2A or SNX2B). Component of a retromer subcomplex consisting of VPS29 (MAG1), VPS26 (VPS26A or VPS26B), VPS35 (VPS35A or VPS35B or VPS35C).

It is found in the cytoplasm. The protein localises to the endosome membrane. Its subcellular location is the prevacuolar compartment membrane. It localises to the golgi apparatus. The protein resides in the trans-Golgi network membrane. In terms of biological role, plays a role in vesicular protein sorting. Component of the membrane-associated retromer complex which is essential in endosome-to-Golgi retrograde transport. The VPS29-VPS26-VPS35 subcomplex may be involved in recycling of specific cargos from endosome to the plasma membrane. This is Vacuolar protein sorting-associated protein 26B (VPS26B) from Arabidopsis thaliana (Mouse-ear cress).